Consider the following 484-residue polypeptide: Cobyric acid synthase (484 aa).

The GATase cobBQ-type domain maps to 251–438 (ALKIAVPMLP…LHGLFGSDAY (188 aa)). The active-site Nucleophile is Cys-333. The active site involves His-430.

Belongs to the CobB/CobQ family. CobQ subfamily.

It functions in the pathway cofactor biosynthesis; adenosylcobalamin biosynthesis. Functionally, catalyzes amidations at positions B, D, E, and G on adenosylcobyrinic A,C-diamide. NH(2) groups are provided by glutamine, and one molecule of ATP is hydrogenolyzed for each amidation. In Rhizobium etli (strain ATCC 51251 / DSM 11541 / JCM 21823 / NBRC 15573 / CFN 42), this protein is Cobyric acid synthase.